The primary structure comprises 366 residues: Ribosomal RNA large subunit methyltransferase M (366 aa).

S-adenosyl-L-methionine is bound by residues serine 188, 221–224, aspartate 240, aspartate 260, and aspartate 277; that span reads CPGG. Lysine 306 functions as the Proton acceptor in the catalytic mechanism.

It belongs to the class I-like SAM-binding methyltransferase superfamily. RNA methyltransferase RlmE family. RlmM subfamily. Monomer.

The protein resides in the cytoplasm. It catalyses the reaction cytidine(2498) in 23S rRNA + S-adenosyl-L-methionine = 2'-O-methylcytidine(2498) in 23S rRNA + S-adenosyl-L-homocysteine + H(+). Functionally, catalyzes the 2'-O-methylation at nucleotide C2498 in 23S rRNA. The polypeptide is Ribosomal RNA large subunit methyltransferase M (Pectobacterium carotovorum subsp. carotovorum (strain PC1)).